A 65-amino-acid polypeptide reads, in one-letter code: Small ribosomal subunit protein eS17 (65 aa).

It belongs to the eukaryotic ribosomal protein eS17 family.

This Methanocella arvoryzae (strain DSM 22066 / NBRC 105507 / MRE50) protein is Small ribosomal subunit protein eS17.